A 373-amino-acid chain; its full sequence is UDP-3-O-acylglucosamine N-acyltransferase 2 (373 aa).

H239 acts as the Proton acceptor in catalysis. The tract at residues 345–373 (KTNGKSGQADAPPKVALECHGTTGDAPQG) is disordered.

This sequence belongs to the transferase hexapeptide repeat family. LpxD subfamily. In terms of assembly, homotrimer.

The enzyme catalyses a UDP-3-O-[(3R)-3-hydroxyacyl]-alpha-D-glucosamine + a (3R)-hydroxyacyl-[ACP] = a UDP-2-N,3-O-bis[(3R)-3-hydroxyacyl]-alpha-D-glucosamine + holo-[ACP] + H(+). Its pathway is bacterial outer membrane biogenesis; LPS lipid A biosynthesis. Its function is as follows. Catalyzes the N-acylation of UDP-3-O-acylglucosamine using 3-hydroxyacyl-ACP as the acyl donor. Is involved in the biosynthesis of lipid A, a phosphorylated glycolipid that anchors the lipopolysaccharide to the outer membrane of the cell. The protein is UDP-3-O-acylglucosamine N-acyltransferase 2 of Gloeobacter violaceus (strain ATCC 29082 / PCC 7421).